Here is a 140-residue protein sequence, read N- to C-terminus: Profilin-2 (140 aa).

A2 carries the N-acetylalanine modification.

It belongs to the profilin family. In terms of assembly, occurs in many kinds of cells as a complex with monomeric actin in a 1:1 ratio. Interacts with PFN2. Interacts with ACTMAP (via N-terminus); the interaction may facilitate efficient cleavage of the acetylated N-terminus of immature actin by ACTMAP.

It localises to the cytoplasm. It is found in the cytoskeleton. Its function is as follows. Binds to actin and affects the structure of the cytoskeleton. At high concentrations, profilin prevents the polymerization of actin, whereas it enhances it at low concentrations. By binding to PIP2, it inhibits the formation of IP3 and DG. The sequence is that of Profilin-2 (PFN2) from Bos taurus (Bovine).